We begin with the raw amino-acid sequence, 205 residues long: ITG-like peptide (205 aa).

Positions 1-15 are cleaved as a signal peptide; that stretch reads MRVYAAITLVLVANT. 2 propeptides span residues 16–188 and 202–205; these read AYIG…TSGE and MPFA.

Expressed throughout the nervous system (at protein level).

The protein localises to the secreted. The protein is ITG-like peptide of Camponotus floridanus (Florida carpenter ant).